The primary structure comprises 178 residues: Bryoporin (178 aa).

Phosphocholine-binding residues include Ser51, Val83, Ser102, Pro104, and Tyr134. Residues Trp101–Ala117 form a trp-rich region region.

Belongs to the actinoporin family. Plant subfamily.

With respect to regulation, inhibited by sphingomyelin. Functionally, actinoporin-related protein having hemolytic activity in vitro. Binds probably a phosphocholine derivative with the unique amido or hydroxyl groups found in sphingomyelin. Involved in drought tolerance. In Physcomitrium patens (Spreading-leaved earth moss), this protein is Bryoporin.